The chain runs to 342 residues: Ketol-acid reductoisomerase (NADP(+)) (342 aa).

The KARI N-terminal Rossmann domain maps to 2 to 181; that stretch reads VKVYYNGDIK…GGARAGVLET (180 aa). NADP(+) is bound by residues 25–28, Arg48, Ser52, and 82–85; these read YGSQ and DEQQ. His107 is a catalytic residue. Position 133 (Gly133) interacts with NADP(+). The KARI C-terminal knotted domain maps to 182–327; it reads TFKEETETDL…RKLREMMPFV (146 aa). Residues Asp190, Glu194, Glu226, and Glu230 each coordinate Mg(2+). Substrate is bound at residue Ser251.

This sequence belongs to the ketol-acid reductoisomerase family. Requires Mg(2+) as cofactor.

It catalyses the reaction (2R)-2,3-dihydroxy-3-methylbutanoate + NADP(+) = (2S)-2-acetolactate + NADPH + H(+). The enzyme catalyses (2R,3R)-2,3-dihydroxy-3-methylpentanoate + NADP(+) = (S)-2-ethyl-2-hydroxy-3-oxobutanoate + NADPH + H(+). Its pathway is amino-acid biosynthesis; L-isoleucine biosynthesis; L-isoleucine from 2-oxobutanoate: step 2/4. The protein operates within amino-acid biosynthesis; L-valine biosynthesis; L-valine from pyruvate: step 2/4. Functionally, involved in the biosynthesis of branched-chain amino acids (BCAA). Catalyzes an alkyl-migration followed by a ketol-acid reduction of (S)-2-acetolactate (S2AL) to yield (R)-2,3-dihydroxy-isovalerate. In the isomerase reaction, S2AL is rearranged via a Mg-dependent methyl migration to produce 3-hydroxy-3-methyl-2-ketobutyrate (HMKB). In the reductase reaction, this 2-ketoacid undergoes a metal-dependent reduction by NADPH to yield (R)-2,3-dihydroxy-isovalerate. This chain is Ketol-acid reductoisomerase (NADP(+)), found in Bacillus licheniformis (strain ATCC 14580 / DSM 13 / JCM 2505 / CCUG 7422 / NBRC 12200 / NCIMB 9375 / NCTC 10341 / NRRL NRS-1264 / Gibson 46).